Consider the following 490-residue polypeptide: ATP-dependent 6-phosphofructokinase (490 aa).

ATP-binding positions include G109, 175–176 (RG), and 200–203 (GDGT). D201 contacts Mg(2+). Substrate contacts are provided by residues 229–231 (TID), 274–276 (MGR), E327, and 383–386 (YMIR). D231 acts as the Proton acceptor in catalysis. The Peroxisomal targeting signal signature appears at 488-490 (SKL).

Belongs to the phosphofructokinase type A (PFKA) family. PPi-dependent PFK group II subfamily. Atypical ATP-dependent clade 'X' sub-subfamily. Homotetramer. Requires Mg(2+) as cofactor.

The protein localises to the glycosome. It carries out the reaction beta-D-fructose 6-phosphate + ATP = beta-D-fructose 1,6-bisphosphate + ADP + H(+). Its pathway is carbohydrate degradation; glycolysis; D-glyceraldehyde 3-phosphate and glycerone phosphate from D-glucose: step 3/4. With respect to regulation, allosterically activated by AMP. Functionally, catalyzes the phosphorylation of D-fructose 6-phosphate to fructose 1,6-bisphosphate by ATP, the first committing step of glycolysis. The chain is ATP-dependent 6-phosphofructokinase from Trypanoplasma borreli.